An 88-amino-acid chain; its full sequence is Monensin polyketide synthase acyl carrier protein (88 aa).

The Carrier domain maps to 5 to 82 (PFTLADLQRI…ELIDHVNERL (78 aa)). An O-(pantetheine 4'-phosphoryl)serine modification is found at Ser42.

In terms of processing, 4'-phosphopantetheine is transferred from CoA to a specific serine of the apo-ACP-like protein.

The protein operates within antifungal biosynthesis; monensin biosynthesis. Acyl carrier protein. The chain is Monensin polyketide synthase acyl carrier protein from Streptomyces virginiae (Streptomyces cinnamonensis).